Reading from the N-terminus, the 63-residue chain is Large ribosomal subunit protein uL29 (63 aa).

This sequence belongs to the universal ribosomal protein uL29 family.

In Alcanivorax borkumensis (strain ATCC 700651 / DSM 11573 / NCIMB 13689 / SK2), this protein is Large ribosomal subunit protein uL29.